Reading from the N-terminus, the 63-residue chain is Beta-defensin 4 (63 aa).

A signal peptide spans 1–22; sequence MRIHYLLFSFLLVLLSPLSAFT. Gln-23 bears the Pyrrolidone carboxylic acid mark. Cystine bridges form between Cys-31-Cys-59, Cys-38-Cys-52, and Cys-42-Cys-60.

This sequence belongs to the beta-defensin family. In terms of tissue distribution, highly expressed in lung.

It is found in the secreted. Exhibits antimicrobial activity against Gram-negative bacteria and Gram-positive bacteria. May act as a ligand for C-C chemokine receptor CCR6. Binds to CCR6 and induces chemotactic activity of CCR6-expressing cells. This Rattus norvegicus (Rat) protein is Beta-defensin 4 (Defb4).